A 106-amino-acid polypeptide reads, in one-letter code: Replication restart protein PriB (106 aa).

Positions 4-103 constitute an SSB domain; sequence TNRLVLSGTV…LHAEQIEFID (100 aa).

Belongs to the PriB family. Homodimer. Interacts with PriA and DnaT. Component of the replication restart primosome. Primosome assembly occurs via a 'hand-off' mechanism. PriA binds to replication forks, subsequently PriB then DnaT bind; DnaT then displaces ssDNA to generate the helicase loading substrate.

Involved in the restart of stalled replication forks, which reloads the replicative helicase on sites other than the origin of replication; the PriA-PriB pathway is the major replication restart pathway. During primosome assembly it facilitates complex formation between PriA and DnaT on DNA; stabilizes PriA on DNA. Stimulates the DNA unwinding activity of PriA helicase. In Yersinia enterocolitica serotype O:8 / biotype 1B (strain NCTC 13174 / 8081), this protein is Replication restart protein PriB.